Here is a 601-residue protein sequence, read N- to C-terminus: NADH-quinone oxidoreductase subunit C/D (601 aa).

Residues 1–192 are NADH dehydrogenase I subunit C; sequence MIVPDLVADA…PPYSLTEDQE (192 aa). An NADH dehydrogenase I subunit D region spans residues 216–601; sequence DFMFLNLGPN…IDFVMADVDR (386 aa).

It in the N-terminal section; belongs to the complex I 30 kDa subunit family. This sequence in the C-terminal section; belongs to the complex I 49 kDa subunit family. As to quaternary structure, NDH-1 is composed of 13 different subunits. Subunits NuoB, CD, E, F, and G constitute the peripheral sector of the complex.

The protein resides in the cell inner membrane. It carries out the reaction a quinone + NADH + 5 H(+)(in) = a quinol + NAD(+) + 4 H(+)(out). Functionally, NDH-1 shuttles electrons from NADH, via FMN and iron-sulfur (Fe-S) centers, to quinones in the respiratory chain. The immediate electron acceptor for the enzyme in this species is believed to be ubiquinone. Couples the redox reaction to proton translocation (for every two electrons transferred, four hydrogen ions are translocated across the cytoplasmic membrane), and thus conserves the redox energy in a proton gradient. The polypeptide is NADH-quinone oxidoreductase subunit C/D (Gluconacetobacter diazotrophicus (strain ATCC 49037 / DSM 5601 / CCUG 37298 / CIP 103539 / LMG 7603 / PAl5)).